We begin with the raw amino-acid sequence, 487 residues long: UDP-N-acetylmuramoyl-L-alanyl-D-glutamate--2,6-diaminopimelate ligase (487 aa).

UDP-N-acetyl-alpha-D-muramoyl-L-alanyl-D-glutamate contacts are provided by leucine 23 and serine 25. Glycine 108–serine 114 lines the ATP pocket. UDP-N-acetyl-alpha-D-muramoyl-L-alanyl-D-glutamate is bound by residues threonine 150 to threonine 151, serine 177, glutamine 183, and arginine 185. Lysine 217 is subject to N6-carboxylysine. Meso-2,6-diaminopimelate-binding positions include arginine 378, aspartate 402–arginine 405, glycine 453, and glutamate 457. A Meso-diaminopimelate recognition motif motif is present at residues aspartate 402–arginine 405.

Belongs to the MurCDEF family. MurE subfamily. It depends on Mg(2+) as a cofactor. In terms of processing, carboxylation is probably crucial for Mg(2+) binding and, consequently, for the gamma-phosphate positioning of ATP.

Its subcellular location is the cytoplasm. The enzyme catalyses UDP-N-acetyl-alpha-D-muramoyl-L-alanyl-D-glutamate + meso-2,6-diaminopimelate + ATP = UDP-N-acetyl-alpha-D-muramoyl-L-alanyl-gamma-D-glutamyl-meso-2,6-diaminopimelate + ADP + phosphate + H(+). It functions in the pathway cell wall biogenesis; peptidoglycan biosynthesis. In terms of biological role, catalyzes the addition of meso-diaminopimelic acid to the nucleotide precursor UDP-N-acetylmuramoyl-L-alanyl-D-glutamate (UMAG) in the biosynthesis of bacterial cell-wall peptidoglycan. The protein is UDP-N-acetylmuramoyl-L-alanyl-D-glutamate--2,6-diaminopimelate ligase of Pseudomonas aeruginosa (strain ATCC 15692 / DSM 22644 / CIP 104116 / JCM 14847 / LMG 12228 / 1C / PRS 101 / PAO1).